The following is a 76-amino-acid chain: Omega-conotoxin-like TxO5 (76 aa).

An N-terminal signal peptide occupies residues 1–22; that stretch reads MKLTCMMIVAVLFLTAWTFVTA. A propeptide spanning residues 23–48 is cleaved from the precursor; sequence ITSNGLENLFPKAHHEMKNPEASKLN. Cystine bridges form between Cys51–Cys66, Cys58–Cys70, and Cys65–Cys75.

This sequence belongs to the conotoxin O1 superfamily. In terms of tissue distribution, expressed by the venom duct.

The protein resides in the secreted. In terms of biological role, omega-conotoxins act at presynaptic membranes, they bind and block voltage-gated calcium channels (Cav). The chain is Omega-conotoxin-like TxO5 from Conus textile (Cloth-of-gold cone).